Consider the following 377-residue polypeptide: Nitric oxide reductase FlRd-NAD(+) reductase (377 aa).

It belongs to the FAD-dependent oxidoreductase family. FAD is required as a cofactor.

Its subcellular location is the cytoplasm. It carries out the reaction 2 reduced [nitric oxide reductase rubredoxin domain] + NAD(+) + H(+) = 2 oxidized [nitric oxide reductase rubredoxin domain] + NADH. The protein operates within nitrogen metabolism; nitric oxide reduction. One of at least two accessory proteins for anaerobic nitric oxide (NO) reductase. Reduces the rubredoxin moiety of NO reductase. The polypeptide is Nitric oxide reductase FlRd-NAD(+) reductase (Salmonella typhi).